The chain runs to 279 residues: uncharacterized protein (279 aa).

The next 6 membrane-spanning stretches (helical) occupy residues 29-49, 77-97, 105-125, 147-167, 186-206, and 240-260; these read PYNM…ALVF, VLYA…GTSL, WTKM…IIVT, VLGI…TGAV, TIGP…AIAF, and PIAG…VEMV.

The protein belongs to the DcuC/DcuD transporter (TC 2.A.61) family.

It is found in the cell membrane. This is an uncharacterized protein from Haemophilus influenzae (strain ATCC 51907 / DSM 11121 / KW20 / Rd).